A 161-amino-acid chain; its full sequence is 2-C-methyl-D-erythritol 2,4-cyclodiphosphate synthase (161 aa).

The a divalent metal cation site is built by Asp-10 and His-12. Residues 10–12 and 36–37 contribute to the 4-CDP-2-C-methyl-D-erythritol 2-phosphate site; these read DVH and HS. His-44 contributes to the a divalent metal cation binding site. Residues 58 to 60, 134 to 137, Phe-141, and Arg-144 each bind 4-CDP-2-C-methyl-D-erythritol 2-phosphate; these read DIG and TTTE.

The protein belongs to the IspF family. In terms of assembly, homotrimer. It depends on a divalent metal cation as a cofactor.

It catalyses the reaction 4-CDP-2-C-methyl-D-erythritol 2-phosphate = 2-C-methyl-D-erythritol 2,4-cyclic diphosphate + CMP. It functions in the pathway isoprenoid biosynthesis; isopentenyl diphosphate biosynthesis via DXP pathway; isopentenyl diphosphate from 1-deoxy-D-xylulose 5-phosphate: step 4/6. Involved in the biosynthesis of isopentenyl diphosphate (IPP) and dimethylallyl diphosphate (DMAPP), two major building blocks of isoprenoid compounds. Catalyzes the conversion of 4-diphosphocytidyl-2-C-methyl-D-erythritol 2-phosphate (CDP-ME2P) to 2-C-methyl-D-erythritol 2,4-cyclodiphosphate (ME-CPP) with a corresponding release of cytidine 5-monophosphate (CMP). This is 2-C-methyl-D-erythritol 2,4-cyclodiphosphate synthase from Parabacteroides distasonis (strain ATCC 8503 / DSM 20701 / CIP 104284 / JCM 5825 / NCTC 11152).